We begin with the raw amino-acid sequence, 113 residues long: Flagellar hook-basal body complex protein FliE (113 aa).

This sequence belongs to the FliE family.

Its subcellular location is the bacterial flagellum basal body. The sequence is that of Flagellar hook-basal body complex protein FliE from Burkholderia mallei (strain NCTC 10247).